A 32-amino-acid chain; its full sequence is Tail virion protein G9P (32 aa).

The helical transmembrane segment at 4 to 24 (LSYFFAAYCIGWVISHSILVF) threads the bilayer.

Belongs to the inovirus G9P protein family.

It localises to the virion. The protein resides in the host membrane. Its function is as follows. May initiate with G7P the virion concomitant assembly-budding process, by interacting with the packaging signal of the viral genome. The assembly-budding takes place at the host inner membrane. In turn, G7P and G9P are present at the end of the filamentous virion that emerges first from the bacterial host. This chain is Tail virion protein G9P (IX), found in Escherichia phage If1 (Bacteriophage If1).